A 224-amino-acid polypeptide reads, in one-letter code: Urease accessory protein UreF (224 aa).

It belongs to the UreF family. As to quaternary structure, ureD, UreF and UreG form a complex that acts as a GTP-hydrolysis-dependent molecular chaperone, activating the urease apoprotein by helping to assemble the nickel containing metallocenter of UreC. The UreE protein probably delivers the nickel.

The protein resides in the cytoplasm. Required for maturation of urease via the functional incorporation of the urease nickel metallocenter. In Pseudomonas fluorescens (strain Pf0-1), this protein is Urease accessory protein UreF.